A 240-amino-acid polypeptide reads, in one-letter code: Ubiquinone biosynthesis O-methyltransferase (240 aa).

Residues arginine 44, glycine 64, aspartate 85, and methionine 129 each coordinate S-adenosyl-L-methionine.

Belongs to the methyltransferase superfamily. UbiG/COQ3 family.

It catalyses the reaction a 3-demethylubiquinol + S-adenosyl-L-methionine = a ubiquinol + S-adenosyl-L-homocysteine + H(+). The catalysed reaction is a 3-(all-trans-polyprenyl)benzene-1,2-diol + S-adenosyl-L-methionine = a 2-methoxy-6-(all-trans-polyprenyl)phenol + S-adenosyl-L-homocysteine + H(+). Its pathway is cofactor biosynthesis; ubiquinone biosynthesis. O-methyltransferase that catalyzes the 2 O-methylation steps in the ubiquinone biosynthetic pathway. The sequence is that of Ubiquinone biosynthesis O-methyltransferase from Escherichia coli O8 (strain IAI1).